A 783-amino-acid chain; its full sequence is Aconitate hydratase, mitochondrial (783 aa).

The transit peptide at 1–25 (MITTRLARMGALAPKSRLLFGTRGM) directs the protein to the mitochondrion. Substrate is bound by residues Gln-102 and 195–197 (DSH). The [4Fe-4S] cluster site is built by Cys-388, Cys-451, and Cys-454. Substrate is bound by residues Arg-477 and Arg-482. The tract at residues 524-555 (EFKLKAPTGDGLPSRGYDPGRDTYQAPPTDRS) is disordered. Substrate contacts are provided by residues Arg-610 and 673–674 (SR).

The protein belongs to the aconitase/IPM isomerase family. It depends on [4Fe-4S] cluster as a cofactor.

The protein resides in the mitochondrion. The catalysed reaction is citrate = D-threo-isocitrate. It carries out the reaction (2R)-homocitrate = cis-homoaconitate + H2O. It participates in carbohydrate metabolism; tricarboxylic acid cycle; isocitrate from oxaloacetate: step 2/2. Its pathway is amino-acid biosynthesis; L-lysine biosynthesis via AAA pathway; L-alpha-aminoadipate from 2-oxoglutarate: step 2/5. In terms of biological role, catalyzes the isomerization of citrate to isocitrate via cis-aconitate, a step in the citric acid cycle. Also catalyzes the reversible dehydration of (R)-homocitrate to cis-homoaconitate, a step in the alpha-aminoadipate pathway for lysine biosynthesis. This chain is Aconitate hydratase, mitochondrial (acoA), found in Emericella nidulans (strain FGSC A4 / ATCC 38163 / CBS 112.46 / NRRL 194 / M139) (Aspergillus nidulans).